The following is a 203-amino-acid chain: Ras-related protein Rab5A (203 aa).

A GTP-binding site is contributed by 18–26 (GDVGTGKSS). The Effector region motif lies at 40-48 (QESTIGAAF). GTP-binding positions include 66–70 (DTAGQ), 124–127 (NKAD), and 154–155 (SA). 2 S-geranylgeranyl cysteine lipidation sites follow: Cys201 and Cys202.

This sequence belongs to the small GTPase superfamily. Rab family. In terms of assembly, interacts with VPS9A. Interacts with NSF and RBP-L. Highly expressed in roots. Expressed at low levels in shoots, flowers and grains.

The protein localises to the prevacuolar compartment membrane. The protein resides in the golgi apparatus membrane. It localises to the cell membrane. Its subcellular location is the protein storage vacuole membrane. In terms of biological role, plays an important role in intracellular trafficking of seed storage proteins to the protein storage vacuoles (PSVs). Participates in the transport of the proglutelins from the Golgi apparatus to the PSVs in endosperm. Functions cooperatively with VPS9A to regulate post-Golgi dense vesicle-mediated transport of storage proteins to the type II protein bodies (PBII) protein storage vacuoles in developing endosperm. Involved in the maintenance of the general structural organization of the endomembrane system in developing endosperm. Binds GTP in vitro. Forms a quaternary complex with the two glutelin zipcode RNA-binding proteins RBP-L and RBP-P, and the membrane trafficking factor NSF. This quaternay complex carries glutelin mRNAs for active transport on endosomes to the cortical endoplasmic reticulum membrane, and enables endosome-mediated glutelin mRNA transport in endosperm cells. This Oryza sativa subsp. japonica (Rice) protein is Ras-related protein Rab5A.